A 376-amino-acid chain; its full sequence is Cytoplasmic tRNA 2-thiolation protein 1 (376 aa).

The protein belongs to the TtcA family. CTU1/NCS6/ATPBD3 subfamily.

The protein resides in the cytoplasm. The protein operates within tRNA modification; 5-methoxycarbonylmethyl-2-thiouridine-tRNA biosynthesis. Functionally, plays a central role in 2-thiolation of mcm(5)S(2)U at tRNA wobble positions of tRNA(Lys), tRNA(Glu) and tRNA(Gln). Directly binds tRNAs and probably acts by catalyzing adenylation of tRNAs, an intermediate required for 2-thiolation. It is unclear whether it acts as a sulfurtransferase that transfers sulfur from thiocarboxylated URM1 onto the uridine of tRNAs at wobble position. Prior mcm(5) tRNA modification by the elongator complex is required for 2-thiolation. May also be involved in protein urmylation. In Scheffersomyces stipitis (strain ATCC 58785 / CBS 6054 / NBRC 10063 / NRRL Y-11545) (Yeast), this protein is Cytoplasmic tRNA 2-thiolation protein 1.